The following is a 303-amino-acid chain: Phytochrome-associated serine/threonine-protein phosphatase 1 (303 aa).

Residues D50, H52, D78, and N110 each coordinate Zn(2+). H111 (proton donor) is an active-site residue. Zn(2+) contacts are provided by H160 and H234.

This sequence belongs to the PPP phosphatase family. PP-6 (PP-V) subfamily. Interacts with PHYA and PHYB, mostly when they are phosphorylated and in Pfr forms. Interacts with TAP46. Interacts with PIN1 and PIN2. Interacts with ABI5. Interacts with PIF3 and PIF4. Protein phosphatase 6 (PP6) holoenzyme is a heterotrimeric complex formed by the catalytic subunit FYPP, a SAPS domain-containing subunit (SAL) and a protein phosphatase 2A regulatory subunit A (PP2AA). Zn(2+) is required as a cofactor. Mostly expressed in flowers. Also detected to a lower extent in stems and leaves. Expressed in roots.

It localises to the cytoplasm. The enzyme catalyses O-phospho-L-seryl-[protein] + H2O = L-seryl-[protein] + phosphate. It carries out the reaction O-phospho-L-threonyl-[protein] + H2O = L-threonyl-[protein] + phosphate. Catalytic subunit of protein phosphatase 6 (PP6). Dephosphorylates phosphorylated phytochromes, with a preference toward Pfr forms. Plays a major role in the photoperiodic control of flowering time in long days by modulating phytochrome signals in flowering time control. Involved in the regulation of polar auxin transport in roots. Dephosphorylates directly the auxin efflux carriers PIN1 and PIN2, thus promoting their proper polar localization in root cell plasma membrane. Acts antagonistically with the protein kinase PID to regulate the reversible phosphorylation of PIN and polar targeting, subsequently impacting polar auxin transport and plant development. Involved in the regulation of abscisic acid (ABA) signaling during seed germination and postgermination seedling growth. Functions as a negative regulator of ABA signaling through direct dephosphorylation and destabilization of ABI5. Acts antagonistically with the protein kinase SRK2E/SNRK2.6 to regulate ABI5 phosphorylation and ABA responses. Involved in the regulation of phosphorylation status in hypocotyl phototropism. Involved in the negative regulation of photomorphogenesis by controlling the stability and transcriptional activity of PIF3 and PIF4 proteins in the dark, via the regulation of their phosphorylation status. This is Phytochrome-associated serine/threonine-protein phosphatase 1 from Arabidopsis thaliana (Mouse-ear cress).